A 207-amino-acid chain; its full sequence is ATP-dependent Clp protease proteolytic subunit (207 aa).

The active-site Nucleophile is S111. H136 is a catalytic residue.

Belongs to the peptidase S14 family. Fourteen ClpP subunits assemble into 2 heptameric rings which stack back to back to give a disk-like structure with a central cavity, resembling the structure of eukaryotic proteasomes.

It is found in the cytoplasm. The enzyme catalyses Hydrolysis of proteins to small peptides in the presence of ATP and magnesium. alpha-casein is the usual test substrate. In the absence of ATP, only oligopeptides shorter than five residues are hydrolyzed (such as succinyl-Leu-Tyr-|-NHMec, and Leu-Tyr-Leu-|-Tyr-Trp, in which cleavage of the -Tyr-|-Leu- and -Tyr-|-Trp bonds also occurs).. Its function is as follows. Cleaves peptides in various proteins in a process that requires ATP hydrolysis. Has a chymotrypsin-like activity. Plays a major role in the degradation of misfolded proteins. This chain is ATP-dependent Clp protease proteolytic subunit, found in Photorhabdus laumondii subsp. laumondii (strain DSM 15139 / CIP 105565 / TT01) (Photorhabdus luminescens subsp. laumondii).